The sequence spans 321 residues: AA9 family lytic polysaccharide monooxygenase D (321 aa).

An N-terminal signal peptide occupies residues 1–21 (MRSTIVATFAAGLVVASLVAA). Position 22 (His-22) interacts with Cu(2+). Intrachain disulfides connect Cys-75/Cys-192 and Cys-116/Cys-120. Asn-78 carries N-linked (GlcNAc...) asparagine glycosylation. Residue His-105 coordinates Cu(2+). A glycan (N-linked (GlcNAc...) asparagine) is linked at Asn-152. Positions 178 and 187 each coordinate O2. Tyr-189 serves as a coordination point for Cu(2+). Asn-266 carries N-linked (GlcNAc...) asparagine glycosylation.

Belongs to the polysaccharide monooxygenase AA9 family. Requires Cu(2+) as cofactor.

The protein localises to the secreted. It carries out the reaction [(1-&gt;4)-beta-D-glucosyl]n+m + reduced acceptor + O2 = 4-dehydro-beta-D-glucosyl-[(1-&gt;4)-beta-D-glucosyl]n-1 + [(1-&gt;4)-beta-D-glucosyl]m + acceptor + H2O.. In terms of biological role, lytic polysaccharide monooxygenase (LPMO) that depolymerizes crystalline and amorphous polysaccharides via the oxidation of scissile alpha- or beta-(1-4)-glycosidic bonds, yielding C1 or C4 oxidation products. Catalysis by LPMOs requires the reduction of the active-site copper from Cu(II) to Cu(I) by a reducing agent and H(2)O(2) or O(2) as a cosubstrate. In Geotrichum candidum (Oospora lactis), this protein is AA9 family lytic polysaccharide monooxygenase D.